A 458-amino-acid chain; its full sequence is Enolase (458 aa).

(2R)-2-phosphoglycerate is bound at residue Q177. The active-site Proton donor is the E219. The Mg(2+) site is built by D256, E310, and D337. (2R)-2-phosphoglycerate contacts are provided by K362, R391, S392, and K413. The Proton acceptor role is filled by K362.

The protein belongs to the enolase family. Requires Mg(2+) as cofactor.

Its subcellular location is the cytoplasm. The protein localises to the secreted. It is found in the cell surface. The enzyme catalyses (2R)-2-phosphoglycerate = phosphoenolpyruvate + H2O. Its pathway is carbohydrate degradation; glycolysis; pyruvate from D-glyceraldehyde 3-phosphate: step 4/5. Functionally, catalyzes the reversible conversion of 2-phosphoglycerate (2-PG) into phosphoenolpyruvate (PEP). It is essential for the degradation of carbohydrates via glycolysis. The protein is Enolase of Mycoplasma genitalium (strain ATCC 33530 / DSM 19775 / NCTC 10195 / G37) (Mycoplasmoides genitalium).